The following is a 513-amino-acid chain: uncharacterized protein (513 aa).

The 59-residue stretch at 3-61 folds into the TRAM domain; that stretch reads NLKIGQKLQLEIERMGINGEGIGVISGRLVFIPYALPGEEVLVEITENARNFSRAKLVK. Residues Gln-309, Tyr-338, Asp-359, and Asp-407 each contribute to the S-adenosyl-L-methionine site. Catalysis depends on Cys-434, which acts as the Nucleophile.

This sequence belongs to the class I-like SAM-binding methyltransferase superfamily. RNA M5U methyltransferase family.

This is an uncharacterized protein from Lactococcus lactis subsp. lactis (strain IL1403) (Streptococcus lactis).